The primary structure comprises 494 residues: Neuronal acetylcholine receptor subunit alpha-6 (494 aa).

An N-terminal signal peptide occupies residues M1 to F25. The Extracellular segment spans residues K26–L239. N54 and N171 each carry an N-linked (GlcNAc...) asparagine glycan. Cystine bridges form between C158/C172 and C222/C223. 3 helical membrane-spanning segments follow: residues P240–L264, V272–T290, and Y306–I327. Topologically, residues H328–R465 are cytoplasmic. Phosphoserine is present on S401. The chain crosses the membrane as a helical span at residues V466 to L484.

Belongs to the ligand-gated ion channel (TC 1.A.9) family. Acetylcholine receptor (TC 1.A.9.1) subfamily. Alpha-6/CHRNA6 sub-subfamily. As to quaternary structure, neuronal AChR is composed of two different types of subunits: alpha and non-alpha (beta). CHRNA6/alpha-6 subunit can be combined to CHRNB2/beta-2, CHRNA4/alpha-4 and CHRNB3/beta-3 to give rise to functional receptors. Heteropentamers containing CHRNB3 have an stoichiometry of (CHRNA6:CHRNB2)2:CHRNB3. Interacts with LYPD6.

It localises to the synaptic cell membrane. The catalysed reaction is Ca(2+)(in) = Ca(2+)(out). The enzyme catalyses K(+)(in) = K(+)(out). It catalyses the reaction Na(+)(in) = Na(+)(out). With respect to regulation, activated by a myriad of ligands such as acetylcholine, cytisine and nicotine. CHRNA6 nAChR activity is inhibited by the antagonists alpha-conotoxin MII and PIA, a small disulfide-constrained peptides from cone snails. Component of neuronal acetylcholine receptors (nAChRs) that function as pentameric, ligand-gated cation channels with high calcium permeability among other activities. nAChRs are excitatory neurotrasnmitter receptors formed by a collection of nAChR subunits known to mediate synaptic transmission in the nervous system and the neuromuscular junction. Each nAchR subunit confers differential attributes to channel properties, including activation, deactivation and desensitization kinetics, pH sensitivity, cation permeability, and binding to allosteric modulators. CHRNA6 forms pentameric channels with CHRNB2, CHRNB3 and CHRNA4 that exhibit high sensitivity to ACh and nicotine and are predominantly expressed in only a few brain areas, including dopaminergic neurons, norepirephrine neurons and cells of the visual system. nAChrs containing CHRNA6 subunits mediate endogenous cholinergic modulation of dopamine and gamma-aminobutyric acid (GABA) release in response to nicotine at nerve terminals. This is Neuronal acetylcholine receptor subunit alpha-6 from Homo sapiens (Human).